Consider the following 652-residue polypeptide: Probable export ATP-binding/permease protein PFL_2149 (652 aa).

Residues L6 to R244 form the ABC transporter domain. An ATP-binding site is contributed by G42–S49. A run of 5 helical transmembrane segments spans residues L251–S271, L277–G297, L525–M545, I586–I606, and M615–V635.

The protein belongs to the ABC transporter superfamily. Macrolide exporter (TC 3.A.1.122) family. Probably part of a tripartite efflux system, which is composed of an inner membrane transporter, a periplasmic membrane fusion protein, and an outer membrane component.

It is found in the cell inner membrane. Probably part of a tripartite efflux system. In Pseudomonas fluorescens (strain ATCC BAA-477 / NRRL B-23932 / Pf-5), this protein is Probable export ATP-binding/permease protein PFL_2149.